We begin with the raw amino-acid sequence, 513 residues long: ATP synthase subunit alpha (513 aa).

169-176 serves as a coordination point for ATP; that stretch reads GDRQTGKT.

The protein belongs to the ATPase alpha/beta chains family. As to quaternary structure, F-type ATPases have 2 components, CF(1) - the catalytic core - and CF(0) - the membrane proton channel. CF(1) has five subunits: alpha(3), beta(3), gamma(1), delta(1), epsilon(1). CF(0) has three main subunits: a(1), b(2) and c(9-12). The alpha and beta chains form an alternating ring which encloses part of the gamma chain. CF(1) is attached to CF(0) by a central stalk formed by the gamma and epsilon chains, while a peripheral stalk is formed by the delta and b chains.

It is found in the cell inner membrane. The catalysed reaction is ATP + H2O + 4 H(+)(in) = ADP + phosphate + 5 H(+)(out). In terms of biological role, produces ATP from ADP in the presence of a proton gradient across the membrane. The alpha chain is a regulatory subunit. The sequence is that of ATP synthase subunit alpha from Escherichia coli O81 (strain ED1a).